The chain runs to 358 residues: Probable arabinan endo-1,5-alpha-L-arabinosidase B (358 aa).

The signal sequence occupies residues 1–16 (MVLVATLFSLFTVSLC). Asp-39 (proton acceptor) is an active-site residue. Asn-194 carries an N-linked (GlcNAc...) asparagine glycan. Positions 202–227 (HLAKHPKTERVNSQDQNPDPLCRDSS) are disordered. The active-site Proton donor is the Glu-233.

Belongs to the glycosyl hydrolase 43 family.

It localises to the secreted. The catalysed reaction is Endohydrolysis of (1-&gt;5)-alpha-arabinofuranosidic linkages in (1-&gt;5)-arabinans.. It functions in the pathway glycan metabolism; L-arabinan degradation. Functionally, endo-1,5-alpha-L-arabinanase involved in degradation of pectin. Its preferred substrate is linear 1,5-alpha-L-arabinan. This is Probable arabinan endo-1,5-alpha-L-arabinosidase B (abnB) from Aspergillus flavus (strain ATCC 200026 / FGSC A1120 / IAM 13836 / NRRL 3357 / JCM 12722 / SRRC 167).